A 939-amino-acid chain; its full sequence is Protein translocase subunit SecA 1 (939 aa).

ATP contacts are provided by residues Gln85, 103–107, and Asp504; that span reads GEGKT. A disordered region spans residues 848 to 939; sequence EVPVEDEKPS…QSKGGRRRKK (92 aa). 3 stretches are compositionally biased toward basic and acidic residues: residues 852–863, 872–889, and 914–925; these read EDEKPSLEKEDA, PEIR…DRLH, and PVRSEADGLTRA. Over residues 926 to 939 the composition is skewed to basic residues; sequence ERRKQSKGGRRRKK.

This sequence belongs to the SecA family. In terms of assembly, monomer and homodimer. Part of the essential Sec protein translocation apparatus which comprises SecA, SecYEG and auxiliary proteins SecDF. Other proteins may also be involved.

Its subcellular location is the cell membrane. It is found in the cytoplasm. The enzyme catalyses ATP + H2O + cellular proteinSide 1 = ADP + phosphate + cellular proteinSide 2.. In terms of biological role, part of the Sec protein translocase complex. Interacts with the SecYEG preprotein conducting channel. Has a central role in coupling the hydrolysis of ATP to the transfer of proteins into and across the cell membrane, serving as an ATP-driven molecular motor driving the stepwise translocation of polypeptide chains across the membrane. The protein is Protein translocase subunit SecA 1 of Streptomyces avermitilis (strain ATCC 31267 / DSM 46492 / JCM 5070 / NBRC 14893 / NCIMB 12804 / NRRL 8165 / MA-4680).